The sequence spans 420 residues: Ribulose bisphosphate carboxylase large chain (420 aa).

The substrate site is built by asparagine 103 and threonine 153. Lysine 155 functions as the Proton acceptor in the catalytic mechanism. Residue lysine 157 participates in substrate binding. Lysine 181, aspartate 183, and glutamate 184 together coordinate Mg(2+). The residue at position 181 (lysine 181) is an N6-carboxylysine. Residue histidine 274 is the Proton acceptor of the active site. Arginine 275, histidine 307, and serine 359 together coordinate substrate.

The protein belongs to the RuBisCO large chain family. Type I subfamily. In terms of assembly, heterohexadecamer of 8 large chains and 8 small chains; disulfide-linked. The disulfide link is formed within the large subunit homodimers. It depends on Mg(2+) as a cofactor. In terms of processing, the disulfide bond which can form in the large chain dimeric partners within the hexadecamer appears to be associated with oxidative stress and protein turnover.

The protein localises to the plastid. Its subcellular location is the chloroplast. It catalyses the reaction 2 (2R)-3-phosphoglycerate + 2 H(+) = D-ribulose 1,5-bisphosphate + CO2 + H2O. The catalysed reaction is D-ribulose 1,5-bisphosphate + O2 = 2-phosphoglycolate + (2R)-3-phosphoglycerate + 2 H(+). Its function is as follows. RuBisCO catalyzes two reactions: the carboxylation of D-ribulose 1,5-bisphosphate, the primary event in carbon dioxide fixation, as well as the oxidative fragmentation of the pentose substrate in the photorespiration process. Both reactions occur simultaneously and in competition at the same active site. The sequence is that of Ribulose bisphosphate carboxylase large chain from Anemia mexicana (Mexican fern).